Consider the following 163-residue polypeptide: Ribonuclease P protein subunit p25-like protein (163 aa).

2 disordered regions span residues 1 to 22 and 129 to 163; these read MEHYRKAGSVELPAPSPMPQLP and NEYGYQPPGAPPDLGPTPASSCGPQPRRRARDTRF. Residues 154–163 show a composition bias toward basic residues; that stretch reads PRRRARDTRF.

Belongs to the histone-like Alba family.

Its subcellular location is the nucleus. May be a component of ribonuclease P or MRP. The polypeptide is Ribonuclease P protein subunit p25-like protein (RPP25L) (Bos taurus (Bovine)).